The chain runs to 522 residues: Zinc finger and BTB domain-containing protein 18 (522 aa).

The region spanning 24–91 (CDCTVLVGDA…MYEGKLQFKD (68 aa)) is the BTB domain. Residues 121–143 (ATTEADSTKKEEDASSCSDKVES) are compositionally biased toward basic and acidic residues. Residues 121–166 (ATTEADSTKKEEDASSCSDKVESLSDGSSHMAGDLPSDEDEGEDDK) are disordered. Serine 157 is modified (phosphoserine). A Glycyl lysine isopeptide (Lys-Gly) (interchain with G-Cter in SUMO2) cross-link involves residue lysine 273. The tract at residues 310 to 427 (EPAHLAPLRE…TFSCMYTLKR (118 aa)) is interaction with DNMT3A. C2H2-type zinc fingers lie at residues 370–392 (FMCP…LSTH), 410–432 (PTCS…ERTH), 438–460 (YTCT…AVVH), and 466–489 (HACK…RKFH). A phosphoserine mark is found at serine 516 and serine 517.

Belongs to the krueppel C2H2-type zinc-finger protein family. ZBTB18 subfamily. In terms of assembly, interacts with DNMT3A.

The protein resides in the nucleus. In terms of biological role, transcriptional repressor that plays a role in various developmental processes such as myogenesis and brain development. Specifically binds the consensus DNA sequence 5'-[AC]ACATCTG[GT][AC]-3' which contains the E box core, and acts by recruiting chromatin remodeling multiprotein complexes. Plays a key role in myogenesis by directly repressing the expression of ID2 and ID3, 2 inhibitors of skeletal myogenesis. Also involved in controlling cell division of progenitor cells and regulating the survival of postmitotic cortical neurons. May also play a role in the organization of chromosomes in the nucleus. In Rattus norvegicus (Rat), this protein is Zinc finger and BTB domain-containing protein 18 (Zbtb18).